The primary structure comprises 50 residues: PhoP/PhoQ regulator MgrB (50 aa).

Over 1–4 the chain is Cytoplasmic; sequence MLDL. Residues 5 to 27 traverse the membrane as a helical segment; sequence NITKLVTTVVIIAACCLFYLLAL. Over 28 to 50 the chain is Periplasmic; that stretch reads DSYCDQGGTFSTGICAITTIVPW.

Belongs to the MgrB family. As to quaternary structure, probably interacts with the periplasmic domain of PhoQ.

The protein resides in the cell inner membrane. In terms of biological role, phoP-regulated transcription is redox-sensitive, being activated when the periplasm becomes more reducing. MgrB acts between DsbA/DsbB and PhoP/PhoQ in this pathway. Represses PhoP/PhoQ signaling, possibly by binding to the periplasmic domain of PhoQ, altering its activity and that of downstream effector PhoP. This chain is PhoP/PhoQ regulator MgrB, found in Yersinia pestis.